We begin with the raw amino-acid sequence, 148 residues long: MNTISSLETTDLPAAYHIEQRAHAFPWSEKTFASNQGERYLNFQLTQNGKMAAFAITQVVLDEATLFNIAVDPDYQRQGLGRALLEHLIDELEKRGVATLWLEVRASNAAAIALYESLGFNEATIRRNYYPTTDGREDAIIMALPISM.

In terms of domain architecture, N-acetyltransferase spans 2–147; that stretch reads NTISSLETTD…DAIIMALPIS (146 aa). 69–71 provides a ligand contact to acetyl-CoA; it reads IAV. Glu103 functions as the Proton acceptor in the catalytic mechanism. Asn108 contacts acetyl-CoA. Tyr115 acts as the Proton donor in catalysis.

Belongs to the acetyltransferase family. RimI subfamily.

The protein resides in the cytoplasm. It catalyses the reaction N-terminal L-alanyl-[ribosomal protein bS18] + acetyl-CoA = N-terminal N(alpha)-acetyl-L-alanyl-[ribosomal protein bS18] + CoA + H(+). Its function is as follows. Acetylates the N-terminal alanine of ribosomal protein bS18. The chain is [Ribosomal protein bS18]-alanine N-acetyltransferase from Escherichia coli O157:H7.